A 367-amino-acid chain; its full sequence is Peptide chain release factor 2 (367 aa).

Gln247 carries the N5-methylglutamine modification.

The protein belongs to the prokaryotic/mitochondrial release factor family. Post-translationally, methylated by PrmC. Methylation increases the termination efficiency of RF2.

Its subcellular location is the cytoplasm. Peptide chain release factor 2 directs the termination of translation in response to the peptide chain termination codons UGA and UAA. This chain is Peptide chain release factor 2, found in Caulobacter sp. (strain K31).